A 367-amino-acid polypeptide reads, in one-letter code: Germination protease (367 aa).

Residues 1–15 constitute a propeptide that is removed on maturation; the sequence is MKEPLDLSKYAVRTD.

It belongs to the peptidase A25 family. In terms of assembly, homotetramer. Autoproteolytically processed. The inactive tetrameric zymogen termed p46 autoprocesses to a smaller form termed p41, which is active only during spore germination.

It carries out the reaction Endopeptidase action with P4 Glu or Asp, P1 preferably Glu &gt; Asp, P1' hydrophobic and P2' Ala.. In terms of biological role, initiates the rapid degradation of small, acid-soluble proteins during spore germination. This Bacillus cytotoxicus (strain DSM 22905 / CIP 110041 / 391-98 / NVH 391-98) protein is Germination protease.